Reading from the N-terminus, the 508-residue chain is Glycerol kinase (508 aa).

ADP is bound at residue Thr-14. Residues Thr-14, Thr-15, and Ser-16 each coordinate ATP. Thr-14 lines the sn-glycerol 3-phosphate pocket. Residue Arg-18 coordinates ADP. Sn-glycerol 3-phosphate-binding residues include Arg-84, Glu-85, Tyr-134, and Asp-247. Glycerol-binding residues include Arg-84, Glu-85, Tyr-134, Asp-247, and Gln-248. ADP is bound by residues Thr-269 and Gly-313. Residues Thr-269, Gly-313, Gln-317, and Gly-416 each coordinate ATP. Gly-416 serves as a coordination point for ADP.

This sequence belongs to the FGGY kinase family.

The catalysed reaction is glycerol + ATP = sn-glycerol 3-phosphate + ADP + H(+). Its pathway is polyol metabolism; glycerol degradation via glycerol kinase pathway; sn-glycerol 3-phosphate from glycerol: step 1/1. Inhibited by fructose 1,6-bisphosphate (FBP). In terms of biological role, key enzyme in the regulation of glycerol uptake and metabolism. Catalyzes the phosphorylation of glycerol to yield sn-glycerol 3-phosphate. This is Glycerol kinase from Mycoplasmoides gallisepticum (strain R(low / passage 15 / clone 2)) (Mycoplasma gallisepticum).